A 257-amino-acid polypeptide reads, in one-letter code: Major prion protein (257 aa).

A signal peptide spans 1–24 (MVKSHIGGWILLLFVATWSDVGLC). Residues 25–234 (KKRPKPGGWN…ESEAYYQRGA (210 aa)) form an interaction with GRB2, ERI3 and SYN1 region. Residues 28–110 (PKPGGWNTGG…GQWGKPNKPK (83 aa)) are disordered. 2 stretches are compositionally biased toward gly residues: residues 33-48 (WNTGGGSRYPGQGSPG) and 55-101 (QGGG…GSHG). Tandem repeats lie at residues 54–62 (PQGGGGWGQ), 63–70 (PHGGGWGQ), 71–78 (PHGGGWGQ), 79–86 (PHGGGWGQ), and 87–95 (PHGGGGWGQ). A 5 X 8 AA tandem repeats of P-H-G-G-G-W-G-Q region spans residues 54-95 (PQGGGGWGQPHGGGWGQPHGGGWGQPHGGGWGQPHGGGGWGQ). 12 residues coordinate Cu(2+): His64, Gly65, Gly66, His72, Gly73, Gly74, His80, Gly81, Gly82, His88, Gly90, and Gly91. Cysteines 183 and 218 form a disulfide. 2 N-linked (GlcNAc...) asparagine glycosylation sites follow: Asn185 and Asn201. Ala234 carries the GPI-anchor amidated alanine lipid modification. Residues 235–257 (SAILFSPPPVILLISLLILLIVG) constitute a propeptide, removed in mature form.

The protein belongs to the prion family. In terms of assembly, monomer and homodimer. Has a tendency to aggregate into amyloid fibrils containing a cross-beta spine, formed by a steric zipper of superposed beta-strands. Soluble oligomers may represent an intermediate stage on the path to fibril formation. Copper binding may promote oligomerization. Interacts with GRB2, APP, ERI3/PRNPIP and SYN1. Mislocalized cytosolically exposed PrP interacts with MGRN1; this interaction alters MGRN1 subcellular location and causes lysosomal enlargement. Interacts with KIAA1191.

It is found in the cell membrane. Its subcellular location is the golgi apparatus. Functionally, its primary physiological function is unclear. Has cytoprotective activity against internal or environmental stresses. May play a role in neuronal development and synaptic plasticity. May be required for neuronal myelin sheath maintenance. May play a role in iron uptake and iron homeostasis. Soluble oligomers are toxic to cultured neuroblastoma cells and induce apoptosis (in vitro). Association with GPC1 (via its heparan sulfate chains) targets PRNP to lipid rafts. Also provides Cu(2+) or Zn(2+) for the ascorbate-mediated GPC1 deaminase degradation of its heparan sulfate side chains. The chain is Major prion protein from Vulpes lagopus (Arctic fox).